Here is a 336-residue protein sequence, read N- to C-terminus: Holliday junction branch migration complex subunit RuvB (336 aa).

The interval 1-175 (MEKYSFESVQ…FGMSFRLQFY (175 aa)) is large ATPase domain (RuvB-L). ATP-binding positions include leucine 14, arginine 15, glycine 56, lysine 59, threonine 60, threonine 61, 122–124 (EDF), arginine 165, tyrosine 175, and arginine 212. Residue threonine 60 coordinates Mg(2+). A small ATPAse domain (RuvB-S) region spans residues 176–253 (EPKELSAIVI…CVRYALNELG (78 aa)). The segment at 256–336 (ELGFDELDLR…IPFLEQKGLF (81 aa)) is head domain (RuvB-H). DNA-binding residues include arginine 310 and arginine 315.

It belongs to the RuvB family. In terms of assembly, homohexamer. Forms an RuvA(8)-RuvB(12)-Holliday junction (HJ) complex. HJ DNA is sandwiched between 2 RuvA tetramers; dsDNA enters through RuvA and exits via RuvB. An RuvB hexamer assembles on each DNA strand where it exits the tetramer. Each RuvB hexamer is contacted by two RuvA subunits (via domain III) on 2 adjacent RuvB subunits; this complex drives branch migration. In the full resolvosome a probable DNA-RuvA(4)-RuvB(12)-RuvC(2) complex forms which resolves the HJ.

The protein localises to the cytoplasm. It carries out the reaction ATP + H2O = ADP + phosphate + H(+). Functionally, the RuvA-RuvB-RuvC complex processes Holliday junction (HJ) DNA during genetic recombination and DNA repair, while the RuvA-RuvB complex plays an important role in the rescue of blocked DNA replication forks via replication fork reversal (RFR). RuvA specifically binds to HJ cruciform DNA, conferring on it an open structure. The RuvB hexamer acts as an ATP-dependent pump, pulling dsDNA into and through the RuvAB complex. RuvB forms 2 homohexamers on either side of HJ DNA bound by 1 or 2 RuvA tetramers; 4 subunits per hexamer contact DNA at a time. Coordinated motions by a converter formed by DNA-disengaged RuvB subunits stimulates ATP hydrolysis and nucleotide exchange. Immobilization of the converter enables RuvB to convert the ATP-contained energy into a lever motion, pulling 2 nucleotides of DNA out of the RuvA tetramer per ATP hydrolyzed, thus driving DNA branch migration. The RuvB motors rotate together with the DNA substrate, which together with the progressing nucleotide cycle form the mechanistic basis for DNA recombination by continuous HJ branch migration. Branch migration allows RuvC to scan DNA until it finds its consensus sequence, where it cleaves and resolves cruciform DNA. The chain is Holliday junction branch migration complex subunit RuvB from Helicobacter hepaticus (strain ATCC 51449 / 3B1).